A 312-amino-acid chain; its full sequence is Methionyl-tRNA formyltransferase (312 aa).

(6S)-5,6,7,8-tetrahydrofolate is bound at residue 109-112 (SLLP).

The protein belongs to the Fmt family.

The enzyme catalyses L-methionyl-tRNA(fMet) + (6R)-10-formyltetrahydrofolate = N-formyl-L-methionyl-tRNA(fMet) + (6S)-5,6,7,8-tetrahydrofolate + H(+). In terms of biological role, attaches a formyl group to the free amino group of methionyl-tRNA(fMet). The formyl group appears to play a dual role in the initiator identity of N-formylmethionyl-tRNA by promoting its recognition by IF2 and preventing the misappropriation of this tRNA by the elongation apparatus. The sequence is that of Methionyl-tRNA formyltransferase from Nitrosospira multiformis (strain ATCC 25196 / NCIMB 11849 / C 71).